The primary structure comprises 278 residues: MGIRKYKPTTPGRRGSSVADFVEVTRSTPEKSLVRPLHSKGGRNNAGRVTVRHQGGGHKRAYRVIDFRRHDKDGVPAKVAHIEYDPNRTARIALLHYADGEKRYILAPRNLQQGDRVENGPGADIKPGNNLALRNIPVGTTVHAIELRPGGGAKFARSAGASVQLLAREGAMATLRMPSGEIRMVDARCRATVGEVGNAEQSNINWGKAGRKRWLGVRPTVRGVAMNPVDHPHGGGEGKTSGGRHPVSPWGQKEGRTRSPKKASSKYIVRRRKTNKKR.

2 disordered regions span residues 27 to 57 (STPE…QGGG) and 224 to 278 (VAMN…NKKR). Basic residues predominate over residues 258–278 (RSPKKASSKYIVRRRKTNKKR).

This sequence belongs to the universal ribosomal protein uL2 family. In terms of assembly, part of the 50S ribosomal subunit. Forms a bridge to the 30S subunit in the 70S ribosome.

In terms of biological role, one of the primary rRNA binding proteins. Required for association of the 30S and 50S subunits to form the 70S ribosome, for tRNA binding and peptide bond formation. It has been suggested to have peptidyltransferase activity; this is somewhat controversial. Makes several contacts with the 16S rRNA in the 70S ribosome. The chain is Large ribosomal subunit protein uL2 from Streptomyces avermitilis (strain ATCC 31267 / DSM 46492 / JCM 5070 / NBRC 14893 / NCIMB 12804 / NRRL 8165 / MA-4680).